We begin with the raw amino-acid sequence, 254 residues long: Winged helix repair factor 1 (254 aa).

The Bipartite nuclear localization signal signature appears at 4–21 (KRHHLIPETFGVKRRRKR). Winged helix domain regions lie at residues 32 to 104 (EPGS…GIIF), 120 to 179 (PYAG…LAVP), and 180 to 254 (GAGR…LPET).

The protein belongs to the STK19 family. In terms of assembly, monomer in solution. Homodimer; when bound to DNA. Component of a transcription-coupled nucleotide excision repair (TC-NER) complex composed of STK19, ERCC6, ERCC8, DDA1, DDB1, ELOF1 and UVSSA which assembles and interacts with the multiprotein RNA polymerase II complex when it stalls at DNA lesions. Monocytes, hepatocytes, epithelial cells, T- and B-lymphocytes.

It is found in the nucleus. The protein localises to the cytoplasm. DNA-binding protein which is required for efficient transcription-coupled nucleotide excision repair (TC-NER). Acts as part of a TC-NER complex which assembles and interacts with RNA polymerase II (RNAPII) when it stalls at DNA lesions. TC-NER complex subunit UVSSA binds to the GTF2H1/p62 subunit of the TFIIH transcription factor complex, tethering TFIIH to the TC-NER complex. WHR1/STK19 then interacts with the XPD helicase subunit of TFIIH which guides TFIIH to DNA downstream of the stalled RNAPII, ensuring DNA repair. Directly interacts with RNAPII and also binds to downstream DNA. Promotes the timely removal of DNA damage-stalled RNAPII, allowing downstream NER factors to access DNA lesions. Required for monoubiquitination of UVSSA. Regulates repositioning and stabilization of UVSSA within the TC-NER complex. Stimulates ubiquitination of RNAPII complex member RBP1. Also binds to RNA and regulates the expression levels of many mRNAs. This Homo sapiens (Human) protein is Winged helix repair factor 1.